A 910-amino-acid polypeptide reads, in one-letter code: DNA mismatch repair protein MutS (910 aa).

The segment covering 1 to 11 has biased composition (basic and acidic residues); that stretch reads MEAKVEEKEPE. Residues 1–21 form a disordered region; that stretch reads MEAKVEEKEPEPVENAGPDAP. 658 to 665 provides a ligand contact to ATP; it reads GPNMGGKS.

Belongs to the DNA mismatch repair MutS family.

In terms of biological role, this protein is involved in the repair of mismatches in DNA. It is possible that it carries out the mismatch recognition step. This protein has a weak ATPase activity. This Brucella canis (strain ATCC 23365 / NCTC 10854 / RM-666) protein is DNA mismatch repair protein MutS.